A 621-amino-acid chain; its full sequence is E3 SUMO-protein ligase PIAS2 (621 aa).

The SAP domain occupies valine 11–leucine 45. The LXXLL motif motif lies at leucine 19–leucine 23. Glycyl lysine isopeptide (Lys-Gly) (interchain with G-Cter in SUMO2) cross-links involve residues lysine 46 and lysine 249. Residues glutamine 134–leucine 299 enclose the PINIT domain. The SP-RING-type zinc-finger motif lies at proline 331–aspartate 412. Residues cysteine 362, histidine 364, cysteine 385, and cysteine 388 each contribute to the Zn(2+) site. Residues lysine 430, lysine 435, lysine 443, and lysine 452 each participate in a glycyl lysine isopeptide (Lys-Gly) (interchain with G-Cter in SUMO2) cross-link. Residues valine 467–threonine 473 form an SUMO1-binding region. Phosphoserine occurs at positions 476, 477, and 478. A Nuclear localization signal motif is present at residues proline 484–phenylalanine 492. Lysine 489 is covalently cross-linked (Glycyl lysine isopeptide (Lys-Gly) (interchain with G-Cter in SUMO2)). Serine 499 is subject to Phosphoserine. Glycyl lysine isopeptide (Lys-Gly) (interchain with G-Cter in SUMO2) cross-links involve residues lysine 502 and glutamine 562. Over residues serine 579–serine 610 the composition is skewed to low complexity. Residues serine 579–aspartate 621 form a disordered region.

It belongs to the PIAS family. In terms of assembly, binds SUMO1 and UBE2I. Interacts with AXIN1, JUN, MDM2, PARK7, TP53 and TP73 isoform alpha, but not TP73 isoform beta. Interacts with STAT4 following IL12 and IFN-alpha stimulation of T-cells. Interacts also with GTF2I, GTF2IRD1, IKFZ1, DAB2 and MSX2, as well as with several steroid receptors, including ESR1, ESR2, NR3C1, PGR, AR, and with NCOA2. Sumoylation of a target protein seems to enhance the interaction. Binds to sumoylated ELK1. Binds DNA, such as CDKN1A promoter, in a sequence-specific manner. Interacts with PLAG1. Interacts with KLF8; the interaction results in SUMO ligation and repression of KLF8 transcriptional activity and of its cell cycle progression into G(1) phase. PIAS2-beta interacts with IFIH1/MDA5. Isoform PIAS2-alpha interacts with PML (isoform PML-12). Interacts with PRDM1/Blimp-1. In terms of processing, sumoylated. As to expression, mainly expressed in testis. Isoform 3 is expressed predominantly in adult testis, weakly in pancreas, embryonic testis and sperm, and at very low levels in other organs.

It is found in the nucleus speckle. It localises to the nucleus. Its subcellular location is the PML body. The protein operates within protein modification; protein sumoylation. Its function is as follows. Functions as an E3-type small ubiquitin-like modifier (SUMO) ligase, stabilizing the interaction between UBE2I and the substrate, and as a SUMO-tethering factor. Plays a crucial role as a transcriptional coregulator in various cellular pathways, including the STAT pathway, the p53 pathway and the steroid hormone signaling pathway. The effects of this transcriptional coregulation, transactivation or silencing may vary depending upon the biological context and the PIAS2 isoform studied. However, it seems to be mostly involved in gene silencing. Binds to sumoylated ELK1 and enhances its transcriptional activity by preventing recruitment of HDAC2 by ELK1, thus reversing SUMO-mediated repression of ELK1 transactivation activity. Isoform PIAS2-beta, but not isoform PIAS2-alpha, promotes MDM2 sumoylation. Isoform PIAS2-alpha promotes PARK7 sumoylation. Isoform PIAS2-beta promotes NCOA2 sumoylation more efficiently than isoform PIAS2-alpha. Isoform PIAS2-alpha sumoylates PML at'Lys-65' and 'Lys-160'. The sequence is that of E3 SUMO-protein ligase PIAS2 (PIAS2) from Homo sapiens (Human).